A 468-amino-acid polypeptide reads, in one-letter code: uncharacterized protein (468 aa).

One can recognise an HTH gntR-type domain in the interval 1 to 69; sequence MKKYQQLAEQ…PQSGYYVAPQ (69 aa). At K312 the chain carries N6-(pyridoxal phosphate)lysine.

The protein in the C-terminal section; belongs to the class-I pyridoxal-phosphate-dependent aminotransferase family.

This is an uncharacterized protein from Escherichia coli (strain K12).